The chain runs to 367 residues: Pyrimidine monooxygenase RutA (367 aa).

Residues 50 to 51 (IK), asparagine 116, glutamate 125, 141 to 142 (RY), and serine 191 each bind FMN.

It belongs to the NtaA/SnaA/DszA monooxygenase family. RutA subfamily.

The enzyme catalyses uracil + FMNH2 + NADH + O2 = (Z)-3-ureidoacrylate + FMN + NAD(+) + H2O + H(+). It carries out the reaction thymine + FMNH2 + NADH + O2 = (Z)-2-methylureidoacrylate + FMN + NAD(+) + H2O + H(+). Functionally, catalyzes the pyrimidine ring opening between N-3 and C-4 by an unusual flavin hydroperoxide-catalyzed mechanism, adding oxygen atoms in the process to yield ureidoacrylate peracid, that immediately reacts with FMN forming ureidoacrylate and FMN-N(5)-oxide. The FMN-N(5)-oxide reacts spontaneously with NADH to produce FMN. Requires the flavin reductase RutF to regenerate FMN in vivo. The protein is Pyrimidine monooxygenase RutA of Allorhizobium ampelinum (strain ATCC BAA-846 / DSM 112012 / S4) (Agrobacterium vitis (strain S4)).